The sequence spans 583 residues: Laccase-21 (583 aa).

Positions 1–29 (MGIAKIPAVLWLLACAVLTFAVAISPAHG) are cleaved as a signal peptide. 2 consecutive Plastocyanin-like domains span residues 39-155 (FITE…PKHG) and 165-323 (KEIP…YYTG). N85 carries N-linked (GlcNAc...) asparagine glycosylation. Cu cation is bound by residues H89, H91, H134, and H136. Residues N282, N311, N384, N387, N399, N409, and N446 are each glycosylated (N-linked (GlcNAc...) asparagine). Residues 436-567 (FPNNPAPVFV…NTVFIVKDGK (132 aa)) form the Plastocyanin-like 3 domain. Cu cation contacts are provided by H484, H487, H489, H546, C547, H548, H552, and M557.

The protein belongs to the multicopper oxidase family. The cofactor is Cu cation.

The protein localises to the secreted. The protein resides in the extracellular space. It is found in the apoplast. It catalyses the reaction 4 hydroquinone + O2 = 4 benzosemiquinone + 2 H2O. Functionally, lignin degradation and detoxification of lignin-derived products. The protein is Laccase-21 (LAC21) of Oryza sativa subsp. japonica (Rice).